Here is a 452-residue protein sequence, read N- to C-terminus: MLCGRPRSSSDNRNFLRERAGLSSAAVQTRIGNSAASRRSPAARPPVPAPPALPRGRPGTEGSTSLSAPAVLVVAVAVVVVVVSAVAWAMANYIHVPPGSPEVPKLNVTVQDQEEHRCREGALSLLQHLRPHWDPQEVTLQLFTDGITNKLIGCYVGNTMEDVVLVRIYGNKTELLVDRDEEVKSFRVLQAHGCAPQLYCTFNNGLCYEFIQGEALDPKHVCNPAIFRLIARQLAKIHAIHAHNGWIPKSNLWLKMGKYFSLIPTGFADEDINKRFLSDIPSSQILQEEMTWMKEILSNLGSPVVLCHNDLLCKNIIYNEKQGDVQFIDYEYSGYNYLAYDIGNHFNEFAGVSDVDYSLYPDRELQSQWLRAYLEAYKEFKGFGTEVTEKEVEILFIQVNQFALASHFFWGLWALIQAKYSTIEFDFLGYAIVRFNQYFKMKPEVTALKVPE.

Residues 26-64 form a disordered region; the sequence is AVQTRIGNSAASRRSPAARPPVPAPPALPRGRPGTEGST. Residues 43-53 are compositionally biased toward pro residues; sequence ARPPVPAPPAL.

The protein belongs to the choline/ethanolamine kinase family. In terms of tissue distribution, expressed in kidney, liver, placenta, heart, leukocyte, ovary and testis.

The protein localises to the cytoplasm. It catalyses the reaction ethanolamine + ATP = phosphoethanolamine + ADP + H(+). It functions in the pathway phospholipid metabolism; phosphatidylethanolamine biosynthesis; phosphatidylethanolamine from ethanolamine: step 1/3. Functionally, highly specific for ethanolamine phosphorylation. May be a rate-controlling step in phosphatidylethanolamine biosynthesis. This is Ethanolamine kinase 1 from Homo sapiens (Human).